A 94-amino-acid chain; its full sequence is Co-chaperonin GroES (94 aa).

The protein belongs to the GroES chaperonin family. Heptamer of 7 subunits arranged in a ring. Interacts with the chaperonin GroEL.

It localises to the cytoplasm. Its function is as follows. Together with the chaperonin GroEL, plays an essential role in assisting protein folding. The GroEL-GroES system forms a nano-cage that allows encapsulation of the non-native substrate proteins and provides a physical environment optimized to promote and accelerate protein folding. GroES binds to the apical surface of the GroEL ring, thereby capping the opening of the GroEL channel. The chain is Co-chaperonin GroES from Heliobacterium modesticaldum (strain ATCC 51547 / Ice1).